The chain runs to 263 residues: N-acyl homoserine lactonase AttM (263 aa).

Zn(2+)-binding residues include histidine 103, histidine 105, aspartate 107, histidine 108, histidine 180, aspartate 202, and histidine 247.

This sequence belongs to the metallo-beta-lactamase superfamily. Requires Zn(2+) as cofactor.

The catalysed reaction is an N-acyl-L-homoserine lactone + H2O = an N-acyl-L-homoserine + H(+). The polypeptide is N-acyl homoserine lactonase AttM (Rhizobium johnstonii (strain DSM 114642 / LMG 32736 / 3841) (Rhizobium leguminosarum bv. viciae)).